A 159-amino-acid polypeptide reads, in one-letter code: Membrane protein FAM174B (159 aa).

The first 27 residues, 1-27 (MRAALPPARLLPLLLLLALLGAPAARA), serve as a signal peptide directing secretion. Residues 28–73 (SRAQSAAPPQPGAERQPRPPPGPGPGNATGTGSGEAAGGGGSSNSS) are disordered. The Extracellular portion of the chain corresponds to 28 to 90 (SRAQSAAPPQ…ISSLLRDLHT (63 aa)). The span at 52-69 (PGNATGTGSGEAAGGGGS) shows a compositional bias: gly residues. Asn54 is a glycosylation site (N-linked (GlcNAc...) asparagine). Residues 91-111 (LKAAVIVACAFTAFLIACLLL) form a helical membrane-spanning segment. At 112 to 159 (RVFRSGKRLKKTRKYDIITTPAERVEMAPLNEEDDEDEDSTVFDIKYR) the chain is on the cytoplasmic side.

Belongs to the FAM174 family.

Its subcellular location is the cell membrane. It localises to the golgi apparatus. Functionally, essential for Golgi structural integrity. The polypeptide is Membrane protein FAM174B (FAM174B) (Bos taurus (Bovine)).